A 69-amino-acid chain; its full sequence is Conotoxin Lt5.10 (69 aa).

The signal sequence occupies residues 1–19 (MLCLPVFIILLLLASPAAP). A propeptide spanning residues 20 to 54 (KSLETRIQNDLIRAGLTDADLKTEKGFLSGLLNVA) is cleaved from the precursor.

Belongs to the conotoxin T superfamily. In terms of processing, contains 2 disulfide bonds that can be either 'C1-C3, C2-C4' or 'C1-C4, C2-C3', since these disulfide connectivities have been observed for conotoxins with cysteine framework V (for examples, see AC P0DQQ7 and AC P81755). As to expression, expressed by the venom duct.

Its subcellular location is the secreted. In Conus litteratus (Lettered cone), this protein is Conotoxin Lt5.10.